Here is a 275-residue protein sequence, read N- to C-terminus: C-type lectin domain family 12 member B (275 aa).

Over 1–41 (MSDEVTYATLMLQDSARVRGNQDGNNLRKEGHPAQSSLWRG) the chain is Cytoplasmic. The short motif at 5 to 10 (VTYATL) is the ITIM motif element. Y7 is subject to Phosphotyrosine. The chain crosses the membrane as a helical; Signal-anchor for type II membrane protein span at residues 42–64 (AALSLMTLCLVLVTGLVTLATMF). Residues 65 to 275 (LQVSNDINSD…ASLVKTEDLD (211 aa)) are Extracellular-facing. N-linked (GlcNAc...) asparagine glycans are attached at residues N91, N175, and N236. The 115-residue stretch at 149 to 263 (YGNSCYYFSI…CSAEIPWICE (115 aa)) folds into the C-type lectin domain. 2 disulfide bridges follow: C171–C262 and C241–C254.

Homodimer. Interacts (via ITIM motif) with PTPN6. Interacts (via ITIM motif) with PTPN11; this interaction triggers dephosphorylation and activation of PTPN11.

The protein resides in the cell membrane. Functionally, inhibitory receptor postulated to negatively regulate immune and non-immune functions. Upon phosphorylation, recruits SH2 domain-containing PTPN6 and PTPN11 phosphatases to its ITIM motif and antagonizes activation signals. Although it inhibits KLRK1/NKG2D-mediated signaling, it does not bind known ligands of KLRK1/NKG2D and therefore is not its inhibitory counterpart. May limit activation of myeloid cell subsets in response to infection or tissue inflammation. May protect target cells against natural killer cell-mediated lysis. May negatively regulate cell cycle and differentiation of melanocytes via inactivation of STAT3. In Mus musculus (Mouse), this protein is C-type lectin domain family 12 member B (Clec12b).